We begin with the raw amino-acid sequence, 651 residues long: Peptide-N(4)-(N-acetyl-beta-glucosaminyl)asparagine amidase (651 aa).

Ala-2 bears the N-acetylalanine mark. In terms of domain architecture, PUB spans 30-91 (EASKLLLTYA…EGETHLIFPK (62 aa)). Residues 116 to 153 (SSQKVEFSQHPAAVRLPAEQPEDPTGLMQHSGNQPGQP) are disordered. Residues 143–152 (MQHSGNQPGQ) show a composition bias toward polar residues. Residues Cys-247, Cys-250, Cys-280, and Cys-283 each contribute to the Zn(2+) site. Catalysis depends on Cys-306, which acts as the Nucleophile. Active-site residues include His-333 and Asp-350. Residues 451-651 (ELGGRVSGSL…LEIIITFSDL (201 aa)) enclose the PAW domain.

Belongs to the transglutaminase-like superfamily. PNGase family. As to quaternary structure, component of a complex required to couple retrotranslocation, ubiquitination and deglycosylation composed of NGLY1, SAKS1, AMFR, VCP and RAD23B. Interacts with the proteasome components RAD23B and PSMC1. Interacts with directly with VCP. Interacts with DERL1, bringing it close to the endoplasmic reticulum membrane. Interacts with SAKS1. It depends on Zn(2+) as a cofactor.

It localises to the cytoplasm. It carries out the reaction Hydrolysis of an N(4)-(acetyl-beta-D-glucosaminyl)asparagine residue in which the glucosamine residue may be further glycosylated, to yield a (substituted) N-acetyl-beta-D-glucosaminylamine and a peptide containing an aspartate residue.. With respect to regulation, inhibited by Z-VAD-fmk, a well-known caspase inhibitor, which inhibits enzyme activity through covalent binding of the carbohydrate to the single Cys-306 residue. Functionally, specifically deglycosylates the denatured form of N-linked glycoproteins in the cytoplasm and assists their proteasome-mediated degradation. Cleaves the beta-aspartyl-glucosamine (GlcNAc) of the glycan and the amide side chain of Asn, converting Asn to Asp. Prefers proteins containing high-mannose over those bearing complex type oligosaccharides. Can recognize misfolded proteins in the endoplasmic reticulum that are exported to the cytosol to be destroyed and deglycosylate them, while it has no activity toward native proteins. Deglycosylation is a prerequisite for subsequent proteasome-mediated degradation of some, but not all, misfolded glycoproteins. This chain is Peptide-N(4)-(N-acetyl-beta-glucosaminyl)asparagine amidase (Ngly1), found in Rattus norvegicus (Rat).